Here is a 407-residue protein sequence, read N- to C-terminus: M protein, serotype 2.1 (407 aa).

A signal peptide spans 1–41 (MARKDTNKQYSLRKLKTGTASVAVAVAVLGAGFANQTTVKA). Positions 81–94 (VEEEHKKVEEEHKK) are 2 X 7 AA tandem repeats. Basic and acidic residues-rich tracts occupy residues 83–144 (EEHK…KRYQ), 152–229 (QLEK…EKQI), 237–264 (LSRDLEASRAAKKDLEAEHQKLKEEKQI), and 272–288 (LSRDLEASREAKKKVEA). A disordered region spans residues 83 to 289 (EEHKKVEEEH…REAKKKVEAD (207 aa)). 4 C repeats span residues 151-185 (QQLEKEKQISEASRKSLRRDLEASRAAKKDLEAEH), 186-220 (QKLKEEKQISEASRKSLRRDLEASRAAKKDLEAEH), 221-255 (QKLKEEKQISEASRQGLSRDLEASRAAKKDLEAEH), and 256-290 (QKLKEEKQISEASRQGLSRDLEASREAKKKVEADL). D repeat units follow at residues 323 to 328 (AKLEAE), 329 to 334 (AKALKE), 337 to 342 (AKQAEE), and 344 to 349 (AKLKGN). The interval 344–382 (AKLKGNQTPNAKVAPQANRSRSAMTQQKRTLPSTGETAN) is disordered. Polar residues predominate over residues 360–380 (ANRSRSAMTQQKRTLPSTGET). Positions 374-378 (LPSTG) match the LPXTG sorting signal motif. At threonine 377 the chain carries Pentaglycyl murein peptidoglycan amidated threonine. Positions 378–407 (GETANPFFTAAAATVMVSAGMLALKRKEEN) are cleaved as a propeptide — removed by sortase.

This sequence belongs to the M protein family.

The protein resides in the secreted. Its subcellular location is the cell wall. Functionally, this protein is one of the different antigenic serotypes of protein M. Protein M is closely associated with virulence of the bacterium and can render the organism resistant to phagocytosis. This chain is M protein, serotype 2.1 (emmL2.1), found in Streptococcus pyogenes.